The primary structure comprises 209 residues: Octanoyltransferase (209 aa).

The BPL/LPL catalytic domain occupies 30 to 209 (DNEPEIVYLV…IQTEFNKIFK (180 aa)). Substrate is bound by residues 69–76 (RGGKFTFH), 143–145 (AIG), and 156–158 (GVA). Cys174 functions as the Acyl-thioester intermediate in the catalytic mechanism.

Belongs to the LipB family.

The protein resides in the cytoplasm. It catalyses the reaction octanoyl-[ACP] + L-lysyl-[protein] = N(6)-octanoyl-L-lysyl-[protein] + holo-[ACP] + H(+). Its pathway is protein modification; protein lipoylation via endogenous pathway; protein N(6)-(lipoyl)lysine from octanoyl-[acyl-carrier-protein]: step 1/2. Catalyzes the transfer of endogenously produced octanoic acid from octanoyl-acyl-carrier-protein onto the lipoyl domains of lipoate-dependent enzymes. Lipoyl-ACP can also act as a substrate although octanoyl-ACP is likely to be the physiological substrate. This chain is Octanoyltransferase, found in Rickettsia felis (strain ATCC VR-1525 / URRWXCal2) (Rickettsia azadi).